Reading from the N-terminus, the 463-residue chain is DNA polymerase subunit gamma-2, mitochondrial (463 aa).

The N-terminal 44 residues, 1–44, are a transit peptide targeting the mitochondrion; it reads MLLTLKNTGQLLVAACSKVARSLAKYHPRVNHHRHCVWCSKRGL.

In terms of assembly, heterotrimer composed of a catalytic subunit and a homodimer of accessory subunits.

The protein resides in the mitochondrion. Its function is as follows. Mitochondrial polymerase processivity subunit. It regulates the polymerase and exonuclease activities promoting processive DNA synthesis. Binds to ss-DNA. This is DNA polymerase subunit gamma-2, mitochondrial (polg2) from Xenopus laevis (African clawed frog).